Consider the following 283-residue polypeptide: Phosphatidylserine decarboxylase proenzyme (283 aa).

Active-site charge relay system; for autoendoproteolytic cleavage activity residues include aspartate 88, histidine 145, and serine 248. Serine 248 (schiff-base intermediate with substrate; via pyruvic acid; for decarboxylase activity) is an active-site residue. Serine 248 is subject to Pyruvic acid (Ser); by autocatalysis.

This sequence belongs to the phosphatidylserine decarboxylase family. PSD-B subfamily. Prokaryotic type I sub-subfamily. In terms of assembly, heterodimer of a large membrane-associated beta subunit and a small pyruvoyl-containing alpha subunit. It depends on pyruvate as a cofactor. Is synthesized initially as an inactive proenzyme. Formation of the active enzyme involves a self-maturation process in which the active site pyruvoyl group is generated from an internal serine residue via an autocatalytic post-translational modification. Two non-identical subunits are generated from the proenzyme in this reaction, and the pyruvate is formed at the N-terminus of the alpha chain, which is derived from the carboxyl end of the proenzyme. The autoendoproteolytic cleavage occurs by a canonical serine protease mechanism, in which the side chain hydroxyl group of the serine supplies its oxygen atom to form the C-terminus of the beta chain, while the remainder of the serine residue undergoes an oxidative deamination to produce ammonia and the pyruvoyl prosthetic group on the alpha chain. During this reaction, the Ser that is part of the protease active site of the proenzyme becomes the pyruvoyl prosthetic group, which constitutes an essential element of the active site of the mature decarboxylase.

Its subcellular location is the cell membrane. It catalyses the reaction a 1,2-diacyl-sn-glycero-3-phospho-L-serine + H(+) = a 1,2-diacyl-sn-glycero-3-phosphoethanolamine + CO2. It participates in phospholipid metabolism; phosphatidylethanolamine biosynthesis; phosphatidylethanolamine from CDP-diacylglycerol: step 2/2. In terms of biological role, catalyzes the formation of phosphatidylethanolamine (PtdEtn) from phosphatidylserine (PtdSer). In Acidovorax ebreus (strain TPSY) (Diaphorobacter sp. (strain TPSY)), this protein is Phosphatidylserine decarboxylase proenzyme.